The sequence spans 443 residues: Eukaryotic translation initiation factor 3 subunit E (443 aa).

Residues 249-417 (LDLFFNAGFI…GTVVMNHPPS (169 aa)) enclose the PCI domain.

The protein belongs to the eIF-3 subunit E family. Component of the eukaryotic translation initiation factor 3 (eIF-3) complex.

The protein localises to the cytoplasm. Functionally, component of the eukaryotic translation initiation factor 3 (eIF-3) complex, which is involved in protein synthesis of a specialized repertoire of mRNAs and, together with other initiation factors, stimulates binding of mRNA and methionyl-tRNAi to the 40S ribosome. The eIF-3 complex specifically targets and initiates translation of a subset of mRNAs involved in cell proliferation. The protein is Eukaryotic translation initiation factor 3 subunit E (int-6) of Neurospora crassa (strain ATCC 24698 / 74-OR23-1A / CBS 708.71 / DSM 1257 / FGSC 987).